Here is a 1251-residue protein sequence, read N- to C-terminus: Phospholipid-transporting ATPase IC (1251 aa).

Residues 1-52 are disordered; it reads MSTERDSETTFDEESQPNDEVVPYSDDETEDELEDQGSTVEPEQNRVNREAE. Topologically, residues 1 to 121 are cytoplasmic; that stretch reads MSTERDSETT…LFEQFKRAAN (121 aa). A compositionally biased stretch (acidic residues) spans 25–35; it reads SDDETEDELED. Basic and acidic residues predominate over residues 43–52; sequence EQNRVNREAE. Residues 122-142 traverse the membrane as a helical segment; sequence FYFLILLILQAIPQISTLAWY. Topologically, residues 143 to 144 are exoplasmic loop; the sequence is TT. A helical transmembrane segment spans residues 145 to 165; sequence LVPLLLVLGITAIKDLVDDVA. At 166–339 the chain is on the cytoplasmic side; that stretch reads RHKMDKEINN…RTKIDYLMNY (174 aa). The helical transmembrane segment at 340-360 threads the bilayer; the sequence is MVYTIFIVLILVSAGLAIGHA. Residues 361–385 lie on the Exoplasmic loop side of the membrane; sequence YWEAQVGNYSWYLYDGENATPSYRG. The chain crosses the membrane as a helical span at residues 386-406; sequence FLNFWGYIIVLNTMVPISLYV. Residues 407–952 lie on the Cytoplasmic side of the membrane; that stretch reads SVEVIRLGQS…SYIRMCKFLR (546 aa). The active-site 4-aspartylphosphate intermediate is Asp-454. Residues Asp-454, Lys-455, Thr-456, Glu-555, Phe-596, Lys-619, Arg-652, Thr-732, Gly-733, Asp-734, Arg-867, and Lys-873 each coordinate ATP. Residue Asp-454 coordinates Mg(2+). Thr-456 is a Mg(2+) binding site. Asp-893 serves as a coordination point for Mg(2+). ATP contacts are provided by Asn-896 and Asp-897. Asp-897 lines the Mg(2+) pocket. The helical transmembrane segment at 953–973 threads the bilayer; it reads YFFYKNFAFTLVHFWYSFFNG. At 974–982 the chain is on the exoplasmic loop side; that stretch reads YSAQTAYED. Residues 983-1003 traverse the membrane as a helical segment; that stretch reads WFITLYNVLYSSLPVLLMGLL. The Cytoplasmic portion of the chain corresponds to 1004-1032; that stretch reads DQDVSDKLSLRFPGLYVVGQRDLLFNYKR. Residues 1033–1053 form a helical membrane-spanning segment; it reads FFVSLLHGVLTSMVLFFIPLG. At 1054–1071 the chain is on the exoplasmic loop side; the sequence is AYLQTVGQDGEAPSDYQS. Residues 1072-1092 form a helical membrane-spanning segment; sequence FAVTVASALVITVNFQIGLDT. Residues 1093-1094 lie on the Cytoplasmic side of the membrane; that stretch reads SY. A helical transmembrane segment spans residues 1095–1115; the sequence is WTFVNAFSIFGSIALYFGIMF. At 1116 to 1142 the chain is on the exoplasmic loop side; the sequence is DFHSAGIHVLFPSAFQFTGTASNALRQ. The chain crosses the membrane as a helical span at residues 1143–1163; it reads PYIWLTIILTVAVCLLPVVAI. The Cytoplasmic segment spans residues 1164–1251; sequence RFLSMTIWPS…TAEYRRTVES (88 aa). Ser-1223 bears the Phosphoserine mark.

Belongs to the cation transport ATPase (P-type) (TC 3.A.3) family. Type IV subfamily. In terms of assembly, component of a P4-ATPase flippase complex which consists of a catalytic alpha subunit ATP8B1 and an accessory beta subunit TMEM30A. The flippase ATP8B1:TMEM30A complex can form an intermediate phosphoenzyme in vitro. Also interacts with beta subunit TMEM30B. Mg(2+) serves as cofactor. In terms of tissue distribution, hepatocytes, bile duct, intestinal epithelial cells (cholangiocytes and ileocytes), and pancreatic acinar cells.

The protein localises to the cell membrane. The protein resides in the apical cell membrane. It localises to the cell projection. Its subcellular location is the stereocilium. It is found in the endoplasmic reticulum. The protein localises to the golgi apparatus. The catalysed reaction is ATP + H2O + phospholipidSide 1 = ADP + phosphate + phospholipidSide 2.. The enzyme catalyses a 1,2-diacyl-sn-glycero-3-phosphocholine(out) + ATP + H2O = a 1,2-diacyl-sn-glycero-3-phosphocholine(in) + ADP + phosphate + H(+). It carries out the reaction a 1,2-diacyl-sn-glycero-3-phospho-L-serine(out) + ATP + H2O = a 1,2-diacyl-sn-glycero-3-phospho-L-serine(in) + ADP + phosphate + H(+). Catalytic component of a P4-ATPase flippase complex which catalyzes the hydrolysis of ATP coupled to the transport of phospholipids, in particular phosphatidylcholines (PC), from the outer to the inner leaflet of the plasma membrane. May participate in the establishment of the canalicular membrane integrity by ensuring asymmetric distribution of phospholipids in the canicular membrane. Thus may have a role in the regulation of bile acids transport into the canaliculus, uptake of bile acids from intestinal contents into intestinal mucosa or both and protect hepatocytes from bile salts. Involved in the microvillus formation in polarized epithelial cells; the function seems to be independent from its flippase activity. Participates in correct apical membrane localization of CDC42, CFTR and SLC10A2. Enables CDC42 clustering at the apical membrane during enterocyte polarization through the interaction between CDC42 polybasic region and negatively charged membrane lipids provided by ATP8B1. Together with TMEM30A is involved in uptake of the synthetic drug alkylphospholipid perifosine. Required for the preservation of cochlear hair cells in the inner ear. According PubMed:20852622 is proposed to act as cardiolipin transporter during inflammatory injury; the function is questioned by PubMed:21475228. The protein is Phospholipid-transporting ATPase IC of Mus musculus (Mouse).